We begin with the raw amino-acid sequence, 354 residues long: UDP-N-acetylglucosamine--N-acetylmuramyl-(pentapeptide) pyrophosphoryl-undecaprenol N-acetylglucosamine transferase (354 aa).

UDP-N-acetyl-alpha-D-glucosamine contacts are provided by residues T15–G17, N127, R163, S191, I244, A263–E268, and Q288.

The protein belongs to the glycosyltransferase 28 family. MurG subfamily.

It localises to the cell inner membrane. The enzyme catalyses di-trans,octa-cis-undecaprenyl diphospho-N-acetyl-alpha-D-muramoyl-L-alanyl-D-glutamyl-meso-2,6-diaminopimeloyl-D-alanyl-D-alanine + UDP-N-acetyl-alpha-D-glucosamine = di-trans,octa-cis-undecaprenyl diphospho-[N-acetyl-alpha-D-glucosaminyl-(1-&gt;4)]-N-acetyl-alpha-D-muramoyl-L-alanyl-D-glutamyl-meso-2,6-diaminopimeloyl-D-alanyl-D-alanine + UDP + H(+). It functions in the pathway cell wall biogenesis; peptidoglycan biosynthesis. In terms of biological role, cell wall formation. Catalyzes the transfer of a GlcNAc subunit on undecaprenyl-pyrophosphoryl-MurNAc-pentapeptide (lipid intermediate I) to form undecaprenyl-pyrophosphoryl-MurNAc-(pentapeptide)GlcNAc (lipid intermediate II). The protein is UDP-N-acetylglucosamine--N-acetylmuramyl-(pentapeptide) pyrophosphoryl-undecaprenol N-acetylglucosamine transferase of Vibrio cholerae serotype O1 (strain ATCC 39315 / El Tor Inaba N16961).